The sequence spans 107 residues: uncharacterized protein (107 aa).

A signal peptide spans 1–20 (MYIKGRLIFFFVVLVIALCS).

This is an uncharacterized protein from Listeria monocytogenes serovar 1/2a (strain ATCC BAA-679 / EGD-e).